The chain runs to 235 residues: 7-carboxy-7-deazaguanine synthase (235 aa).

Substrate-binding positions include 27 to 29 (LQG) and Arg42. One can recognise a Radical SAM core domain in the interval 33-235 (FSGQPSVFVR…VQVHKILKIA (203 aa)). Residues Cys46, Cys50, and Cys53 each contribute to the [4Fe-4S] cluster site. Mg(2+) is bound at residue Thr55. Thr87 serves as a coordination point for substrate. Residues Gly89 and 133 to 135 (SPK) contribute to the S-adenosyl-L-methionine site.

This sequence belongs to the radical SAM superfamily. 7-carboxy-7-deazaguanine synthase family. In terms of assembly, homodimer. [4Fe-4S] cluster is required as a cofactor. Requires S-adenosyl-L-methionine as cofactor. The cofactor is Mg(2+).

The catalysed reaction is 6-carboxy-5,6,7,8-tetrahydropterin + H(+) = 7-carboxy-7-deazaguanine + NH4(+). It functions in the pathway purine metabolism; 7-cyano-7-deazaguanine biosynthesis. Functionally, catalyzes the complex heterocyclic radical-mediated conversion of 6-carboxy-5,6,7,8-tetrahydropterin (CPH4) to 7-carboxy-7-deazaguanine (CDG), a step common to the biosynthetic pathways of all 7-deazapurine-containing compounds. The sequence is that of 7-carboxy-7-deazaguanine synthase from Rhodospirillum rubrum (strain ATCC 11170 / ATH 1.1.1 / DSM 467 / LMG 4362 / NCIMB 8255 / S1).